The chain runs to 412 residues: Angiopoietin-related protein 4 (412 aa).

Positions 1-23 (MRSAPTARAALVLCAATAGLLSA) are cleaved as a signal peptide. Residues 106 to 153 (ETLHSLQTQLKAQNSKIQQLFQKVAQQQRHLEKQHLRIQNLQGQLDHL) adopt a coiled-coil conformation. Asn-183 is a glycosylation site (N-linked (GlcNAc...) asparagine). The 223-residue stretch at 185–407 (SRLHRLPRDC…ATTMLIQPTV (223 aa)) folds into the Fibrinogen C-terminal domain. Cystine bridges form between Cys-194/Cys-222 and Cys-347/Cys-360.

Homooligomer; disulfide-linked via Cys residues in the N-terminal part of the protein. The homooligomer undergoes proteolytic processing to release the ANGPTL4 C-terminal chain, which circulates as a monomer. The homooligomer unprocessed form is able to interact with the extracellular matrix. N-glycosylated. Post-translationally, forms disulfide-linked dimers and tetramers. In terms of processing, cleaved into a smaller N-terminal chain and a larger chain that contains the fibrinogen C-terminal domain; both cleaved and uncleaved forms are detected in the extracellular space. The cleaved form is not present within the cell.

It is found in the secreted. Its subcellular location is the extracellular space. It localises to the extracellular matrix. Its function is as follows. Mediates inactivation of the lipoprotein lipase LPL, and thereby plays a role in the regulation of triglyceride clearance from the blood serum and in lipid metabolism. May also play a role in regulating glucose homeostasis and insulin sensitivity. Inhibits proliferation, migration, and tubule formation of endothelial cells and reduces vascular leakage. Upon heterologous expression, inhibits the adhesion of endothelial cell to the extracellular matrix (ECM), and inhibits the reorganization of the actin cytoskeleton, formation of actin stress fibers and focal adhesions in endothelial cells that have adhered to ANGPTL4-containing ECM (in vitro). Depending on context, may modulate tumor-related angiogenesis. Mediates inactivation of the lipoprotein lipase LPL, and thereby plays an important role in the regulation of triglyceride clearance from the blood serum and in lipid metabolism. Has higher activity in LPL inactivation than the uncleaved protein. The sequence is that of Angiopoietin-related protein 4 (ANGPTL4) from Sus scrofa (Pig).